The primary structure comprises 635 residues: Very-long-chain aldehyde decarbonylase GL1-6 (635 aa).

4 helical membrane passes run 46-66 (LLNF…QLWI), 100-120 (IILT…AQVA), 127-147 (GMVV…YWLH), and 183-203 (VVYF…GTVS). Residues 139–273 (VEFLYYWLHR…MPVYDYIYGT (135 aa)) form the Fatty acid hydroxylase domain.

The protein belongs to the sterol desaturase family. As to quaternary structure, homodimer. As to expression, expressed in germinating seeds and shoots.

The protein resides in the endoplasmic reticulum membrane. It catalyses the reaction a long-chain fatty aldehyde + 2 NADPH + O2 + H(+) = a long-chain alkane + formate + 2 NADP(+) + H2O. Its function is as follows. Aldehyde decarbonylase involved in the conversion of aldehydes to alkanes. Core component of a very-long-chain alkane synthesis complex. The chain is Very-long-chain aldehyde decarbonylase GL1-6 from Oryza sativa subsp. japonica (Rice).